Consider the following 457-residue polypeptide: Argininosuccinate lyase (457 aa).

The protein belongs to the lyase 1 family. Argininosuccinate lyase subfamily.

The protein localises to the cytoplasm. It carries out the reaction 2-(N(omega)-L-arginino)succinate = fumarate + L-arginine. The protein operates within amino-acid biosynthesis; L-arginine biosynthesis; L-arginine from L-ornithine and carbamoyl phosphate: step 3/3. The polypeptide is Argininosuccinate lyase (Yersinia pseudotuberculosis serotype O:3 (strain YPIII)).